The sequence spans 285 residues: Seipin (285 aa).

Topologically, residues 1 to 16 (MKINVSRPLQFLQWSS) are cytoplasmic. A helical transmembrane segment spans residues 17-37 (YIVVAFLIQLLIILPLSILIY). Over 38-244 (HDFYLRLLPA…GLRNLMLRKR (207 aa)) the chain is Lumenal. The chain crosses the membrane as a helical span at residues 245 to 265 (FLSYIIGISIFHCIICVLFFI). At 266–285 (TGCTAFIFVRKGQEKSKKHS) the chain is on the cytoplasmic side.

This sequence belongs to the seipin family.

It localises to the endoplasmic reticulum membrane. In terms of biological role, involved in lipid metabolism and lipid droplet (LD) morphology, number, and size. Facilitates initiation of LD formation, and ensures that vectorial budding of LDs from the ER is directed towards the cytoplasm. In Saccharomyces cerevisiae (strain ATCC 204508 / S288c) (Baker's yeast), this protein is Seipin.